We begin with the raw amino-acid sequence, 111 residues long: Large ribosomal subunit protein uL22 (111 aa).

The protein belongs to the universal ribosomal protein uL22 family. In terms of assembly, part of the 50S ribosomal subunit.

This protein binds specifically to 23S rRNA; its binding is stimulated by other ribosomal proteins, e.g. L4, L17, and L20. It is important during the early stages of 50S assembly. It makes multiple contacts with different domains of the 23S rRNA in the assembled 50S subunit and ribosome. Its function is as follows. The globular domain of the protein is located near the polypeptide exit tunnel on the outside of the subunit, while an extended beta-hairpin is found that lines the wall of the exit tunnel in the center of the 70S ribosome. In Chlamydia muridarum (strain MoPn / Nigg), this protein is Large ribosomal subunit protein uL22.